Reading from the N-terminus, the 273-residue chain is 4-hydroxy-tetrahydrodipicolinate reductase (273 aa).

NAD(+) contacts are provided by residues glycine 12–methionine 17 and glutamate 38. Arginine 39 is a binding site for NADP(+). NAD(+)-binding positions include glycine 102–threonine 104 and alanine 126–phenylalanine 129. Histidine 159 acts as the Proton donor/acceptor in catalysis. Residue histidine 160 coordinates (S)-2,3,4,5-tetrahydrodipicolinate. Lysine 163 serves as the catalytic Proton donor. Glycine 169 to threonine 170 is a binding site for (S)-2,3,4,5-tetrahydrodipicolinate.

This sequence belongs to the DapB family. In terms of assembly, homotetramer.

The protein localises to the cytoplasm. It catalyses the reaction (S)-2,3,4,5-tetrahydrodipicolinate + NAD(+) + H2O = (2S,4S)-4-hydroxy-2,3,4,5-tetrahydrodipicolinate + NADH + H(+). The catalysed reaction is (S)-2,3,4,5-tetrahydrodipicolinate + NADP(+) + H2O = (2S,4S)-4-hydroxy-2,3,4,5-tetrahydrodipicolinate + NADPH + H(+). It participates in amino-acid biosynthesis; L-lysine biosynthesis via DAP pathway; (S)-tetrahydrodipicolinate from L-aspartate: step 4/4. Catalyzes the conversion of 4-hydroxy-tetrahydrodipicolinate (HTPA) to tetrahydrodipicolinate. This Yersinia enterocolitica serotype O:8 / biotype 1B (strain NCTC 13174 / 8081) protein is 4-hydroxy-tetrahydrodipicolinate reductase.